Here is a 207-residue protein sequence, read N- to C-terminus: Large ribosomal subunit protein uL3 (207 aa).

The disordered stretch occupies residues Lys-113–Ala-148.

This sequence belongs to the universal ribosomal protein uL3 family. In terms of assembly, part of the 50S ribosomal subunit. Forms a cluster with proteins L14 and L19.

Functionally, one of the primary rRNA binding proteins, it binds directly near the 3'-end of the 23S rRNA, where it nucleates assembly of the 50S subunit. The polypeptide is Large ribosomal subunit protein uL3 (Lactococcus lactis subsp. lactis (strain IL1403) (Streptococcus lactis)).